The primary structure comprises 185 residues: TATA-box-binding protein 2 (185 aa).

A run of 2 repeats spans residues 7 to 84 and 100 to 178.

The protein belongs to the TBP family.

Functionally, general factor that plays a role in the activation of archaeal genes transcribed by RNA polymerase. Binds specifically to the TATA box promoter element which lies close to the position of transcription initiation. The chain is TATA-box-binding protein 2 from Methanosarcina acetivorans (strain ATCC 35395 / DSM 2834 / JCM 12185 / C2A).